Consider the following 302-residue polypeptide: Large ribosomal subunit protein uL3c (302 aa).

The N-terminal 36 residues, 1 to 36, are a transit peptide targeting the chloroplast; sequence MFQSSRLVALGLCAALVLVGGSIILSGLSPNLSSPM. The segment at 208-239 is disordered; that stretch reads FQGSIRRWGMKRGPMSHGSKSHRQHGSIGCSA.

The protein belongs to the universal ribosomal protein uL3 family. Part of the 50S ribosomal subunit.

It localises to the plastid. It is found in the chloroplast. Its function is as follows. One of the primary rRNA binding proteins, it binds directly near the 3'-end of the 23S rRNA, where it nucleates assembly of the 50S subunit. The sequence is that of Large ribosomal subunit protein uL3c (RPL3) from Bigelowiella natans (Pedinomonas minutissima).